The primary structure comprises 133 residues: Antifungal protein ginkbilobin-like protein 2 (133 aa).

Residues 1–24 form the signal peptide; it reads MSMGSFGFALAVMVLAVLVASAAG. Positions 28–133 constitute a Gnk2-homologous domain; that stretch reads TNLVSSACNG…CFIRYEQYSI (106 aa). Asparagine 36 lines the alpha-D-mannopyranose pocket. 2 disulfide bridges follow: cysteine 87–cysteine 96 and cysteine 99–cysteine 124. Positions 118 and 129 each coordinate alpha-D-mannopyranose.

Its function is as follows. Exerts antifungal activity through its carbohydrate-binding specificity. This chain is Antifungal protein ginkbilobin-like protein 2, found in Picea glauca (White spruce).